Consider the following 718-residue polypeptide: Kinesin-2a (718 aa).

Positions N5–I335 constitute a Kinesin motor domain. ATP is bound at residue G97–T104. ADP is bound by residues G100, G102, K103, T104, and W105. Position 104 (T104) interacts with Mg(2+). Residues S432–Q477 are a coiled coil.

Belongs to the TRAFAC class myosin-kinesin ATPase superfamily. Kinesin family. Kinesin II subfamily. Monomer.

It is found in the cell projection. It localises to the cilium. The protein resides in the flagellum. The protein localises to the cytoplasm. Its subcellular location is the cytoskeleton. It is found in the flagellum axoneme. It localises to the flagellum basal body. Involved in anterograde intraflagellar transport (IFT). Involved in flagellar assembly. The protein is Kinesin-2a of Giardia intestinalis (strain ATCC 50803 / WB clone C6) (Giardia lamblia).